A 314-amino-acid chain; its full sequence is Ribosomal RNA small subunit methyltransferase H (314 aa).

Residues 36–38, aspartate 56, phenylalanine 80, aspartate 102, and glutamine 109 contribute to the S-adenosyl-L-methionine site; that span reads GGH.

This sequence belongs to the methyltransferase superfamily. RsmH family.

The protein localises to the cytoplasm. It catalyses the reaction cytidine(1402) in 16S rRNA + S-adenosyl-L-methionine = N(4)-methylcytidine(1402) in 16S rRNA + S-adenosyl-L-homocysteine + H(+). In terms of biological role, specifically methylates the N4 position of cytidine in position 1402 (C1402) of 16S rRNA. This Citrobacter koseri (strain ATCC BAA-895 / CDC 4225-83 / SGSC4696) protein is Ribosomal RNA small subunit methyltransferase H.